We begin with the raw amino-acid sequence, 1912 residues long: Methylcytosine dioxygenase TET2 (1912 aa).

Residues 1-11 show a composition bias toward basic and acidic residues; it reads MEQDRTTHAEG. The segment at 1-86 is disordered; the sequence is MEQDRTTHAE…PHEDRGYSRC (86 aa). Phosphoserine occurs at positions 15 and 23. Residues 53-74 are compositionally biased toward polar residues; sequence TKWQSSQSCYGISHMKGSQSSH. A phosphoserine mark is found at serine 76 and serine 97. Disordered regions lie at residues 112–166, 340–359, 367–388, 429–470, 673–723, 832–862, 907–966, and 1009–1052; these read LDQK…FPTR, DRNL…QKET, SSKF…QSLL, IDHQ…PEKS, PQTQ…DKQR, EQAQ…AEAA, QEQQ…NGQP, and ESEN…EGCN. Composition is skewed to polar residues over residues 135–158, 340–353, 367–387, 434–447, and 673–689; these read SRQP…QESS, DRNL…SEQY, SSKF…SQSL, KTSS…SVHT, and PQTQ…SNFP. The span at 690-701 shows a compositional bias: low complexity; sequence QICQQQQQQQLQ. Composition is skewed to polar residues over residues 707-719 and 832-844; these read QMPQ…QGSN and EQAQ…SSLQ. Residues 907–921 show a composition bias toward low complexity; sequence QEQQQTQQSQPGHNQ. 2 stretches are compositionally biased toward polar residues: residues 944–966 and 1036–1046; these read PQEN…NGQP and SDTPGEQSQNG. Serine 1036 carries the phosphoserine modification. Residues cysteine 1048, cysteine 1106, histidine 1132, and cysteine 1134 each coordinate Zn(2+). Arginine 1174 contributes to the 2-oxoglutarate binding site. Zn(2+) is bound by residues cysteine 1184, cysteine 1186, cysteine 1202, and cysteine 1211. The segment at 1203–1216 is interaction with DNA; the sequence is SWSMYYNGCKFARS. Residue lysine 1212 forms a Glycyl lysine isopeptide (Lys-Gly) (interchain with G-Cter in ubiquitin) linkage. A Zn(2+)-binding site is contributed by cysteine 1271. Residue cysteine 1287 participates in 2-oxoglutarate binding. Histidine 1293 is a binding site for Zn(2+). Histidine 1295 and aspartate 1297 together coordinate Fe cation. Substrate is bound at residue asparagine 1300. Histidine 1329 lines the 2-oxoglutarate pocket. 2 disordered regions span residues 1379 to 1414 and 1444 to 1514; these read KKKA…SSSH and LQRH…HTSD. Positions 1387-1396 are enriched in basic residues; sequence AKTKKAARKR. Positions 1456–1473 are enriched in pro residues; sequence QPQPPQPQPQTTPQPQPQ. Positions 1480-1512 are enriched in polar residues; that stretch reads GNSQSVGSHCSGSTSVYTRQPTPHSPYPSSAHT. Residue histidine 1795 coordinates Fe cation. A 2-oxoglutarate-binding site is contributed by 1810-1812; the sequence is RIS. A substrate-binding site is contributed by 1816–1818; sequence YRH. Position 1826 (histidine 1826) interacts with Zn(2+). Residues 1842 to 1866 show a composition bias toward basic and acidic residues; the sequence is EEECGKNGSDHVSQKNHGKQEKREP. The segment at 1842–1871 is disordered; that stretch reads EEECGKNGSDHVSQKNHGKQEKREPTGPQE.

Belongs to the TET family. As to quaternary structure, interacts with HCFC1. Interacts with OGT. Interacts with PROSER1; this interaction mediates TET2 O-GlcNAcylation and stability by promoting the interaction between OGT and TET2. Directly interacts (via C-terminus) with the DCAF1 component of the CRL4(VprBP) E3 ubiquitin-protein ligase complex. It depends on Fe(2+) as a cofactor. Requires Zn(2+) as cofactor. In terms of processing, may be glycosylated. It is unclear whether interaction with OGT leads to GlcNAcylation. According to a report, it is GlcNAcylated by OGT. In contrast, another group reports no GlcNAcylation by OGT in human ortholog. Monoubiquitinated at Lys-1212 by the DCX (DDB1-CUL4-X-box) E3 ubiquitin-protein ligase complex called CRL4(VprBP) or CUL4A-RBX1-DDB1-DCAF1/VPRBP complex; this modification promotes binding to DNA. Post-translationally, acetylated. As to expression, expressed in the brain, kidney, heart, lung, muscle and stomach. Expressed in germinal vesicle (GV) stage and MII-stage oocytes and in early embryos. Present in embryonic stem cells (ES cells).

It is found in the nucleus. The protein localises to the chromosome. It catalyses the reaction a 5-methyl-2'-deoxycytidine in DNA + 2-oxoglutarate + O2 = a 5-hydroxymethyl-2'-deoxycytidine in DNA + succinate + CO2. The catalysed reaction is a 5-hydroxymethyl-2'-deoxycytidine in DNA + 2-oxoglutarate + O2 = a 5-formyl-2'-deoxycytidine in DNA + succinate + CO2 + H2O. The enzyme catalyses a 5-formyl-2'-deoxycytidine in DNA + 2-oxoglutarate + O2 = a 5-carboxyl-2'-deoxycytidine in DNA + succinate + CO2 + H(+). In terms of biological role, dioxygenase that catalyzes the conversion of the modified genomic base 5-methylcytosine (5mC) into 5-hydroxymethylcytosine (5hmC) and plays a key role in active DNA demethylation. Has a preference for 5-hydroxymethylcytosine in CpG motifs. Also mediates subsequent conversion of 5hmC into 5-formylcytosine (5fC), and conversion of 5fC to 5-carboxylcytosine (5caC). Conversion of 5mC into 5hmC, 5fC and 5caC probably constitutes the first step in cytosine demethylation. Methylation at the C5 position of cytosine bases is an epigenetic modification of the mammalian genome which plays an important role in transcriptional regulation. In addition to its role in DNA demethylation, also involved in the recruitment of the O-GlcNAc transferase OGT to CpG-rich transcription start sites of active genes, thereby promoting histone H2B GlcNAcylation by OGT. The chain is Methylcytosine dioxygenase TET2 (Tet2) from Mus musculus (Mouse).